The primary structure comprises 283 residues: Bifunctional protein FolD (283 aa).

NADP(+) is bound by residues 165–167 (GRG), threonine 192, and valine 233.

It belongs to the tetrahydrofolate dehydrogenase/cyclohydrolase family. In terms of assembly, homodimer.

The enzyme catalyses (6R)-5,10-methylene-5,6,7,8-tetrahydrofolate + NADP(+) = (6R)-5,10-methenyltetrahydrofolate + NADPH. The catalysed reaction is (6R)-5,10-methenyltetrahydrofolate + H2O = (6R)-10-formyltetrahydrofolate + H(+). The protein operates within one-carbon metabolism; tetrahydrofolate interconversion. In terms of biological role, catalyzes the oxidation of 5,10-methylenetetrahydrofolate to 5,10-methenyltetrahydrofolate and then the hydrolysis of 5,10-methenyltetrahydrofolate to 10-formyltetrahydrofolate. This chain is Bifunctional protein FolD, found in Thermobifida fusca (strain YX).